The sequence spans 442 residues: MRTIAIVGKPNVGKSSLFNRILMRRKSIVDDQPGVTRDRIYDIGNWLTRSFMLIDTGGIISSKDTYQDNINEQVLFAINEANTIIFLVSAKDGINNDDKKIAKMLKEKAKDKKIILVINKIESEKYYLNEGELYSFGFGKFFKISAEHGIGMGDLLDELVKDMPIQNNLEKQERFKFCIIGRPNVGKSSLTNTILGEQRVIVNAEAGSTRDSIDNDFNYYNKKYTIIDTAGIRRKGKIVESVEKYAVLRTKKAIERSQLILLVLDGSEPFKEQDEVVGGLAYNANIPTIIIVNKWDNIINKNSHTMEMVKKQIRSQFKYLSWAPIVFVSALDNKRIHTIFEAIEFVREQAMRKIATSLLNDVVIKANAFQEPPPFKGGRISISYIVQVQSQIPTFVLKCNNPKFLHFSYARYIENEIRKAFGFDSVPITLYWQDKNKKLRGE.

EngA-type G domains lie at 2–167 and 175–351; these read RTIA…PIQN and FKFC…EQAM. GTP-binding positions include 8 to 15, 55 to 59, 119 to 122, 181 to 188, 228 to 232, and 293 to 296; these read GKPNVGKS, DTGGI, NKIE, GRPNVGKS, DTAGI, and NKWD. Positions 352 to 436 constitute a KH-like domain; the sequence is RKIATSLLND…PITLYWQDKN (85 aa).

This sequence belongs to the TRAFAC class TrmE-Era-EngA-EngB-Septin-like GTPase superfamily. EngA (Der) GTPase family. In terms of assembly, associates with the 50S ribosomal subunit.

Its function is as follows. GTPase that plays an essential role in the late steps of ribosome biogenesis. The protein is GTPase Der of Ureaplasma parvum serovar 3 (strain ATCC 27815 / 27 / NCTC 11736).